We begin with the raw amino-acid sequence, 186 residues long: Ribosome-recycling factor (186 aa).

This sequence belongs to the RRF family.

It is found in the cytoplasm. Its function is as follows. Responsible for the release of ribosomes from messenger RNA at the termination of protein biosynthesis. May increase the efficiency of translation by recycling ribosomes from one round of translation to another. This chain is Ribosome-recycling factor, found in Chlorobium phaeovibrioides (strain DSM 265 / 1930) (Prosthecochloris vibrioformis (strain DSM 265)).